The primary structure comprises 526 residues: Dolichyl pyrophosphate Glc1Man9GlcNAc2 alpha-1,3-glucosyltransferase (526 aa).

The next 11 helical transmembrane spans lie at phenylalanine 4 to leucine 24, leucine 103 to histidine 122, phenylalanine 143 to phenylalanine 163, glycine 188 to alanine 208, leucine 238 to alanine 258, proline 334 to cysteine 354, leucine 368 to alanine 388, valine 389 to leucine 409, leucine 427 to phenylalanine 449, threonine 461 to threonine 481, and proline 488 to leucine 508.

Belongs to the ALG6/ALG8 glucosyltransferase family.

It is found in the endoplasmic reticulum membrane. The catalysed reaction is an alpha-D-Glc-(1-&gt;3)-alpha-D-Man-(1-&gt;2)-alpha-D-Man-(1-&gt;2)-alpha-D-Man-(1-&gt;3)-[alpha-D-Man-(1-&gt;2)-alpha-D-Man-(1-&gt;3)-[alpha-D-Man-(1-&gt;2)-alpha-D-Man-(1-&gt;6)]-alpha-D-Man-(1-&gt;6)]-beta-D-Man-(1-&gt;4)-beta-D-GlcNAc-(1-&gt;4)-alpha-D-GlcNAc-diphospho-di-trans,poly-cis-dolichol + a di-trans,poly-cis-dolichyl beta-D-glucosyl phosphate = an alpha-D-Glc-(1-&gt;3)-alpha-D-Glc-(1-&gt;3)-alpha-D-Man-(1-&gt;2)-alpha-D-Man-(1-&gt;2)-alpha-D-Man-(1-&gt;3)-[alpha-D-Man-(1-&gt;2)-alpha-D-Man-(1-&gt;3)-[alpha-D-Man-(1-&gt;2)-alpha-D-Man-(1-&gt;6)]-alpha-D-Man-(1-&gt;6)]-beta-D-Man-(1-&gt;4)-beta-D-GlcNAc-(1-&gt;4)-alpha-D-GlcNAc-diphospho-di-trans,poly-cis-dolichol + a di-trans,poly-cis-dolichyl phosphate + H(+). Its pathway is protein modification; protein glycosylation. Functionally, dolichyl pyrophosphate Glc1Man9GlcNAc2 alpha-1,3-glucosyltransferase that operates in the biosynthetic pathway of dolichol-linked oligosaccharides, the glycan precursors employed in protein asparagine (N)-glycosylation. The assembly of dolichol-linked oligosaccharides begins on the cytosolic side of the endoplasmic reticulum membrane and finishes in its lumen. The sequential addition of sugars to dolichol pyrophosphate produces dolichol-linked oligosaccharides containing fourteen sugars, including two GlcNAcs, nine mannoses and three glucoses. Once assembled, the oligosaccharide is transferred from the lipid to nascent proteins by oligosaccharyltransferases. In the lumen of the endoplasmic reticulum, adds the second glucose residue from dolichyl phosphate glucose (Dol-P-Glc) onto the lipid-linked oligosaccharide intermediate Glc(1)Man(9)GlcNAc(2)-PP-Dol to produce Glc(2)Man(9)GlcNAc(2)-PP-Dol. Glc(2)Man(9)GlcNAc(2)-PP-Dol is a substrate for ALG10, the following enzyme in the biosynthetic pathway. Required for PKD1/Polycystin-1 maturation and localization to the plasma membrane of the primary cilia. The polypeptide is Dolichyl pyrophosphate Glc1Man9GlcNAc2 alpha-1,3-glucosyltransferase (Bos taurus (Bovine)).